We begin with the raw amino-acid sequence, 271 residues long: (+)-cis,trans-nepetalactol synthase NEPS1 (271 aa).

NAD(+) contacts are provided by residues 24–30, 49–51, 72–73, and Asn-99; these read GGASGIG, DIQ, and DV. Residues Thr-154 and Tyr-167 each coordinate substrate. Residues Tyr-167, Lys-171, and 200–205 each bind NAD(+); that span reads VLTPLA. Catalysis depends on Tyr-167, which acts as the Proton acceptor.

It belongs to the short-chain dehydrogenases/reductases (SDR) family.

The enzyme catalyses (S)-8-oxocitronellyl enol = cis-trans-nepetalactol. It catalyses the reaction cis-cis-nepetalactol + NAD(+) = cis-cis-nepetalactone + NADH + H(+). The catalysed reaction is cis-trans-nepetalactol + NAD(+) = cis-trans-nepetalactone + NADH + H(+). Functionally, bifunctional enzyme that possesses cyclase and dehydrogenase activities. Functions as a non-oxidoreductive cyclase to promote the formation of cis-trans-nepetalactol. Functions as dehydrogenase to oxidize cis-cis-nepetalactol and cis-trans-nepetalactol into nepetalactones, metabolites that are both insect-repellent and have euphoric effect in cats. Binds NAD(+) as classical short-chain dehydrogenase/reductase (SDR), but does not utilize it for its redox-neutral cyclase activity. This is (+)-cis,trans-nepetalactol synthase NEPS1 from Nepeta racemosa (Catmint).